We begin with the raw amino-acid sequence, 299 residues long: N-acetylmuramic acid 6-phosphate etherase (299 aa).

An SIS domain is found at 54 to 217 (TIAQYKKGGR…STITMVGVGK (164 aa)). Residue E82 is the Proton donor of the active site. Residue E113 is part of the active site.

It belongs to the GCKR-like family. MurNAc-6-P etherase subfamily. In terms of assembly, homodimer.

It carries out the reaction N-acetyl-D-muramate 6-phosphate + H2O = N-acetyl-D-glucosamine 6-phosphate + (R)-lactate. Its pathway is amino-sugar metabolism; N-acetylmuramate degradation. Functionally, specifically catalyzes the cleavage of the D-lactyl ether substituent of MurNAc 6-phosphate, producing GlcNAc 6-phosphate and D-lactate. The protein is N-acetylmuramic acid 6-phosphate etherase of Staphylococcus aureus (strain bovine RF122 / ET3-1).